An 832-amino-acid polypeptide reads, in one-letter code: WD repeat-containing protein 75 (832 aa).

13 WD repeats span residues 4 to 43, 47 to 86, 90 to 134, 148 to 187, 196 to 233, 239 to 278, 281 to 320, 326 to 364, 378 to 425, 432 to 474, 485 to 523, 527 to 567, and 572 to 609; these read KTDI…KVYS, EEWL…KLWD, GILI…QLVA, KELS…YFFR, LKAT…RLWR, KEYT…VQWQ, DMSK…SIIE, SGLI…QFYS, QQEY…KLWA, SFVL…KAWC, YWSC…TLWS, WELL…CCWN, and ALEW…FVFK. 2 disordered regions span residues 704–723 and 759–811; these read QHKL…HTQG and VREE…AQER. Acidic residues predominate over residues 764–785; that stretch reads DSSEQEMDSEKEEEESEEEMEA. Positions 799–811 are enriched in basic and acidic residues; sequence DEQKPKLSKAQER.

In terms of assembly, component of the proposed t-UTP subcomplex of the ribosomal small subunit (SSU) processome. SSU processome is composed of more than 70 proteins and the RNA chaperone small nucleolar RNA (snoRNA) U3.

It localises to the nucleus. Its subcellular location is the nucleolus. Ribosome biogenesis factor. Part of the small subunit (SSU) processome, first precursor of the small eukaryotic ribosomal subunit. During the assembly of the SSU processome in the nucleolus, many ribosome biogenesis factors, an RNA chaperone and ribosomal proteins associate with the nascent pre-rRNA and work in concert to generate RNA folding, modifications, rearrangements and cleavage as well as targeted degradation of pre-ribosomal RNA by the RNA exosome. Involved in nucleolar processing of pre-18S ribosomal RNA. Required for optimal pre-ribosomal RNA transcription by RNA polymerase I. The polypeptide is WD repeat-containing protein 75 (wdr75) (Danio rerio (Zebrafish)).